The following is a 352-amino-acid chain: C-C chemokine receptor type 5 (352 aa).

Residues 1–30 (MVYQVSSPTYDIDYYTSEPCQKINVKQIAA) are Extracellular-facing. Sulfotyrosine is present on Tyr-3. O-linked (GalNAc...) serine glycosylation is found at Ser-6 and Ser-7. Residues Tyr-10, Tyr-14, and Tyr-15 each carry the sulfotyrosine modification. 2 cysteine pairs are disulfide-bonded: Cys-20–Cys-269 and Cys-101–Cys-178. A helical membrane pass occupies residues 31–58 (RLLPPLYSLVFIFGFVGNILVVLILINC). The Cytoplasmic portion of the chain corresponds to 59–68 (KRLKSMTDIY). Residues 69 to 89 (LLNLAISDLLFLLTIPFWAHY) traverse the membrane as a helical segment. Topologically, residues 90–102 (AAAQWDFGNTMCQ) are extracellular. A helical membrane pass occupies residues 103 to 124 (LLTGLYLIGFFSGIFFIILLTI). At 125–141 (DRYLAIVHAVFALKART) the chain is on the cytoplasmic side. Residues 142–166 (VTFGLVTSVITWVVAVFASLPGIIF) form a helical membrane-spanning segment. The Extracellular portion of the chain corresponds to 167–198 (TRSQREGLHYTCSSHFPSSQYQFWKNFQTLKI). The helical transmembrane segment at 199–218 (VILGLVLPLLVMVICYSGIL) threads the bilayer. At 219 to 235 (KTLLRCRNEKKRHRAVR) the chain is on the cytoplasmic side. The chain crosses the membrane as a helical span at residues 236–260 (LIFTIMIVYFLFWAPYNIVLLLNTF). The Extracellular segment spans residues 261–277 (QEFFGLNNCSSSNRLDQ). Residues 278 to 301 (AMQVTETLGMTHCCINPIIYAFVG) traverse the membrane as a helical segment. Residues 302-352 (EKFRNYLLVFFQKHLAKRFCKCCSISQQEAPERASSVYTRSTGEQETTVGL) are Cytoplasmic-facing. S-palmitoyl cysteine attachment occurs at residues Cys-321, Cys-323, and Cys-324. 3 positions are modified to phosphoserine; by BARK1: Ser-336, Ser-337, and Ser-342.

This sequence belongs to the G-protein coupled receptor 1 family. As to quaternary structure, interacts with PRAF2. Efficient ligand binding to CCL3/MIP-1alpha and CCL4/MIP-1beta requires sulfation, O-glycosylation and sialic acid modifications. Glycosylation on Ser-6 is required for efficient binding of CCL4. Interacts with GRK2. Interacts with ARRB1 and ARRB2. Interacts with CNIH4. Interacts with S100A4; this interaction stimulates T-lymphocyte chemotaxis. In terms of processing, sulfated on at least 2 of the N-terminal tyrosines. Sulfation is required for efficient binding of the chemokines, CCL3 and CCL4. Post-translationally, palmitoylation in the C-terminal is important for cell surface expression. Phosphorylation on serine residues in the C-terminal is stimulated by binding CC chemokines especially by APO-RANTES. In terms of processing, O-glycosylated, but not N-glycosylated. Ser-6 appears to be the major site even if Ser-7 may be also O-glycosylated. Also sialylated glycans present which contribute to chemokine binding. Thr-16 and Ser-17 may also be glycosylated and, if so, with small moieties such as a T-antigen.

The protein localises to the cell membrane. Functionally, receptor for a number of inflammatory CC-chemokines including CCL3/MIP-1-alpha, CCL4/MIP-1-beta and RANTES and subsequently transduces a signal by increasing the intracellular calcium ion level. May play a role in the control of granulocytic lineage proliferation or differentiation. Participates in T-lymphocyte migration to the infection site by acting as a chemotactic receptor. The protein is C-C chemokine receptor type 5 (CCR5) of Allochrocebus solatus (Sun-tailed monkey).